Here is a 251-residue protein sequence, read N- to C-terminus: 5'-nucleotidase SurE (251 aa).

A divalent metal cation contacts are provided by aspartate 8, aspartate 9, serine 39, and asparagine 95.

It belongs to the SurE nucleotidase family. Requires a divalent metal cation as cofactor.

Its subcellular location is the cytoplasm. The enzyme catalyses a ribonucleoside 5'-phosphate + H2O = a ribonucleoside + phosphate. Nucleotidase that shows phosphatase activity on nucleoside 5'-monophosphates. This chain is 5'-nucleotidase SurE, found in Clostridium botulinum (strain Eklund 17B / Type B).